The primary structure comprises 92 residues: Small ribosomal subunit protein uS19 (92 aa).

It belongs to the universal ribosomal protein uS19 family.

Protein S19 forms a complex with S13 that binds strongly to the 16S ribosomal RNA. This chain is Small ribosomal subunit protein uS19, found in Bradyrhizobium diazoefficiens (strain JCM 10833 / BCRC 13528 / IAM 13628 / NBRC 14792 / USDA 110).